A 129-amino-acid chain; its full sequence is D-ribose pyranase (129 aa).

Histidine 20 functions as the Proton donor in the catalytic mechanism. Substrate-binding positions include aspartate 28, histidine 96, and 118–120; that span reads YAN.

Belongs to the RbsD / FucU family. RbsD subfamily. As to quaternary structure, homodecamer.

Its subcellular location is the cytoplasm. The catalysed reaction is beta-D-ribopyranose = beta-D-ribofuranose. It functions in the pathway carbohydrate metabolism; D-ribose degradation; D-ribose 5-phosphate from beta-D-ribopyranose: step 1/2. Its function is as follows. Catalyzes the interconversion of beta-pyran and beta-furan forms of D-ribose. In Streptomyces avermitilis (strain ATCC 31267 / DSM 46492 / JCM 5070 / NBRC 14893 / NCIMB 12804 / NRRL 8165 / MA-4680), this protein is D-ribose pyranase.